The sequence spans 181 residues: Ribonuclease HII (181 aa).

One can recognise an RNase H type-2 domain in the interval 1 to 181 (MICGIDEVGR…SLHRKSFQLI (181 aa)). Residues aspartate 6, glutamate 7, and aspartate 98 each contribute to the a divalent metal cation site.

It belongs to the RNase HII family. Mn(2+) is required as a cofactor. It depends on Mg(2+) as a cofactor.

Its subcellular location is the cytoplasm. It catalyses the reaction Endonucleolytic cleavage to 5'-phosphomonoester.. In terms of biological role, endonuclease that specifically degrades the RNA of RNA-DNA hybrids. The chain is Ribonuclease HII from Borrelia duttonii (strain Ly).